The sequence spans 80 residues: Cell division protein ZapB (80 aa).

Positions 3–80 (FEVLEQLESK…ALLGKMDEVE (78 aa)) form a coiled coil. A compositionally biased stretch (basic and acidic residues) spans 41–53 (ANELRSQREELEQ). Residues 41–60 (ANELRSQREELEQKSQQAQQ) form a disordered region.

This sequence belongs to the ZapB family. As to quaternary structure, homodimer. The ends of the coiled-coil dimer bind to each other, forming polymers. Interacts with FtsZ.

It localises to the cytoplasm. In terms of biological role, non-essential, abundant cell division factor that is required for proper Z-ring formation. It is recruited early to the divisome by direct interaction with FtsZ, stimulating Z-ring assembly and thereby promoting cell division earlier in the cell cycle. Its recruitment to the Z-ring requires functional FtsA or ZipA. This is Cell division protein ZapB from Vibrio campbellii (strain ATCC BAA-1116).